The following is a 414-amino-acid chain: Signal recognition particle receptor FtsY (414 aa).

GTP-binding positions include 216 to 223, 298 to 302, and 362 to 365; these read GVNGVGKT, DTAGR, and TKLD.

Belongs to the GTP-binding SRP family. FtsY subfamily. In terms of assembly, part of the signal recognition particle protein translocation system, which is composed of SRP and FtsY. SRP is a ribonucleoprotein composed of Ffh and a 4.5S RNA molecule.

The protein resides in the cell inner membrane. The protein localises to the cytoplasm. The enzyme catalyses GTP + H2O = GDP + phosphate + H(+). Its function is as follows. Involved in targeting and insertion of nascent membrane proteins into the cytoplasmic membrane. Acts as a receptor for the complex formed by the signal recognition particle (SRP) and the ribosome-nascent chain (RNC). Interaction with SRP-RNC leads to the transfer of the RNC complex to the Sec translocase for insertion into the membrane, the hydrolysis of GTP by both Ffh and FtsY, and the dissociation of the SRP-FtsY complex into the individual components. In Haemophilus influenzae (strain ATCC 51907 / DSM 11121 / KW20 / Rd), this protein is Signal recognition particle receptor FtsY.